The following is a 289-amino-acid chain: 4-hydroxybenzoate octaprenyltransferase (289 aa).

8 helical membrane passes run 23–43 (IGAL…TPGV), 46–66 (LWIL…GCVV), 99–119 (LFVV…TMTI), 141–161 (LPQV…FAAV), 163–183 (ESVP…AVAY), 213–233 (LIIG…GWLN), 234–254 (GLGW…VYQQ), and 268–288 (AFMN…MSYV).

The protein belongs to the UbiA prenyltransferase family. Mg(2+) serves as cofactor.

It localises to the cell inner membrane. It carries out the reaction all-trans-octaprenyl diphosphate + 4-hydroxybenzoate = 4-hydroxy-3-(all-trans-octaprenyl)benzoate + diphosphate. The protein operates within cofactor biosynthesis; ubiquinone biosynthesis. Its function is as follows. Catalyzes the prenylation of para-hydroxybenzoate (PHB) with an all-trans polyprenyl group. Mediates the second step in the final reaction sequence of ubiquinone-8 (UQ-8) biosynthesis, which is the condensation of the polyisoprenoid side chain with PHB, generating the first membrane-bound Q intermediate 3-octaprenyl-4-hydroxybenzoate. This Citrobacter koseri (strain ATCC BAA-895 / CDC 4225-83 / SGSC4696) protein is 4-hydroxybenzoate octaprenyltransferase.